The chain runs to 696 residues: Serine/threonine-protein kinase sck1 (696 aa).

Disordered regions lie at residues 1-59 (MTEI…YDPV) and 77-118 (HKEQ…TPPS). Polar residues predominate over residues 11–37 (SSNSENTNQASPSTIQSHSTQPVLSND). 2 stretches are compositionally biased toward basic and acidic residues: residues 38-49 (HSTKVNDYEGKE) and 77-88 (HKEQSLKEDKES). Residues 122 to 272 (IRHDTVVPKD…VQEAWYKLEP (151 aa)) form the C2 domain. One can recognise a Protein kinase domain in the interval 302-563 (FTALRLIGKG…TTELKEHPFF (262 aa)). Residues 308 to 316 (IGKGTFGQV) and K331 contribute to the ATP site. The active-site Proton acceptor is D428. Positions 564-643 (ADINWDLLSK…VNKSIDEQFQ (80 aa)) constitute an AGC-kinase C-terminal domain. The residue at position 632 (T632) is a Phosphothreonine. At S665 the chain carries Phosphoserine.

The protein belongs to the protein kinase superfamily. AGC Ser/Thr protein kinase family. cAMP subfamily.

The catalysed reaction is L-seryl-[protein] + ATP = O-phospho-L-seryl-[protein] + ADP + H(+). It carries out the reaction L-threonyl-[protein] + ATP = O-phospho-L-threonyl-[protein] + ADP + H(+). In terms of biological role, protein kinase that is part of growth control pathway which is at least partially redundant with the cAMP pathway. Required for trehalase activation. This is Serine/threonine-protein kinase sck1 (sck1) from Schizosaccharomyces pombe (strain 972 / ATCC 24843) (Fission yeast).